The primary structure comprises 255 residues: MTSIDLNCDLGEGFGPWQMGNDAAMIELATSVNIACGFHAGDADIMHQTVKLAKARGVAVGAHPGFRDLHGFGRRPVPGITAAEIENLVAYQIGALQAVAALAGHKVSHVKAHGALSNVACEDDMTARAIAAAIKAVDPKLVFVVLASSKLQTAGEAAGLTLAHEVFADRAYEDDATLVSRKKPGAVLHDPIEIAERVLRMVQDGAVLSVTGKLIKLRTDTVCIHGDTAGAVEIARGLRARLAQAGITVAPFARG.

It belongs to the LamB/PxpA family. Forms a complex composed of PxpA, PxpB and PxpC.

The catalysed reaction is 5-oxo-L-proline + ATP + 2 H2O = L-glutamate + ADP + phosphate + H(+). Its function is as follows. Catalyzes the cleavage of 5-oxoproline to form L-glutamate coupled to the hydrolysis of ATP to ADP and inorganic phosphate. This chain is 5-oxoprolinase subunit A, found in Rhodopseudomonas palustris (strain BisA53).